A 323-amino-acid chain; its full sequence is tRNA U34 carboxymethyltransferase (323 aa).

Carboxy-S-adenosyl-L-methionine-binding positions include lysine 91, tryptophan 105, lysine 110, glycine 130, aspartate 152–threonine 154, isoleucine 181–glutamate 182, methionine 196, tyrosine 200, and arginine 315.

It belongs to the class I-like SAM-binding methyltransferase superfamily. CmoB family. In terms of assembly, homotetramer.

It carries out the reaction carboxy-S-adenosyl-L-methionine + 5-hydroxyuridine(34) in tRNA = 5-carboxymethoxyuridine(34) in tRNA + S-adenosyl-L-homocysteine + H(+). In terms of biological role, catalyzes carboxymethyl transfer from carboxy-S-adenosyl-L-methionine (Cx-SAM) to 5-hydroxyuridine (ho5U) to form 5-carboxymethoxyuridine (cmo5U) at position 34 in tRNAs. The sequence is that of tRNA U34 carboxymethyltransferase from Salmonella typhimurium (strain LT2 / SGSC1412 / ATCC 700720).